The sequence spans 640 residues: Protection of telomeres protein 1 (640 aa).

Belongs to the telombin family. As to quaternary structure, homodimer or homooligomer. Component of the shelterin complex (telosome) composed of TERF1, TERF2, TINF2, TERF2IP, ACD and POT1. Binds single-stranded telomeric DNA as a monomer. Associated component of the telomerase holoenzyme complex. Found in a complex with TERF1, TINF2 and TNKS1. Interacts with TNKS1. Forms heterodimers with ACD. Identified in a complex with ACD and single-stranded telomeric DNA.

The protein resides in the nucleus. The protein localises to the chromosome. It is found in the telomere. Functionally, component of the telomerase ribonucleoprotein (RNP) complex that is essential for the replication of chromosome termini. Is a component of the double-stranded telomeric DNA-binding TRF1 complex which is involved in the regulation of telomere length by cis-inhibition of telomerase. Also acts as a single-stranded telomeric DNA-binding protein and thus may act as a downstream effector of the TRF1 complex and may transduce information about telomere maintenance and/or length to the telomere terminus. Component of the shelterin complex (telosome) that is involved in the regulation of telomere length and protection. Shelterin associates with arrays of double-stranded TTAGGG repeats added by telomerase and protects chromosome ends; without its protective activity, telomeres are no longer hidden from the DNA damage surveillance and chromosome ends are inappropriately processed by DNA repair pathways. Binds to two or more telomeric single-stranded 5'-TTAGGG-3' repeats (G-strand) and with high specificity to a minimal telomeric single-stranded 5'-TAGGGTTAG-3' sequence. Binds telomeric single-stranded sequences internally or at proximity of a 3'-end. Its activity is TERT dependent but it does not increase TERT activity. This is Protection of telomeres protein 1 (Pot1) from Mus musculus (Mouse).